The primary structure comprises 116 residues: Large ribosomal subunit protein bL17 (116 aa).

This sequence belongs to the bacterial ribosomal protein bL17 family. Part of the 50S ribosomal subunit. Contacts protein L32.

The polypeptide is Large ribosomal subunit protein bL17 (Synechococcus sp. (strain WH7803)).